A 253-amino-acid chain; its full sequence is Ribonuclease HII (253 aa).

One can recognise an RNase H type-2 domain in the interval 70 to 253 (NLIAGIDEVG…KSFEPIKSML (184 aa)). 3 residues coordinate a divalent metal cation: D76, E77, and D168.

Belongs to the RNase HII family. Mn(2+) serves as cofactor. The cofactor is Mg(2+).

Its subcellular location is the cytoplasm. The enzyme catalyses Endonucleolytic cleavage to 5'-phosphomonoester.. Its function is as follows. Endonuclease that specifically degrades the RNA of RNA-DNA hybrids. This chain is Ribonuclease HII, found in Streptococcus agalactiae serotype Ia (strain ATCC 27591 / A909 / CDC SS700).